The sequence spans 1139 residues: MGKVEDFEEHNKNSNQDIEKNVGNRRRSNSNTINDQNENINKNKAIVTKKSFIMNLLRNKEKTKVEQNDDNIVENMNERKNSLKDMSLISDNVEKDNKVKKKNSYLKNLNILGKTKSIEFSFPSNILNNARKNIQEIDEESPLTSNSLRTYKEGISEDNRQNQRNADNNSLNWSTSNINTECNSEFSNIEVKVLKTEKSNSVKLKDNIIDIPNDKNKKELQEINIKNTNKDSYKNLYLKVRNSISFNDNIKIDDENKNDKNNIIDNYNNYDDINSSNEITIDGLNHDDNIKKIDNINNFDNKHDDNLQDHHQNHVHHTFRSSRKSLGNIKSNNTNIKLNNDKNFDTNINKRSILEKYFYDIWKRNITIKKEIYSLSSKNPPNPLKSTFADACQNESSEKELLKKIPLKFNDDSIESLYVLNLNNWISSRMIIIGIVMLILSFIIWPLTTWSLKTSTWGRETYIIILFHTLMAINTLILIFFIIIGSTELCKYSECMSYVLFSLMVALWGLWNIAIGLTLEYNPNLSEMPTTTYELEMIYVLTYIYGFLPLVIIDIFFPSRTKYNWIIHLIFIFLNSSSIILVGSAKPDFVPEIYVVFRILAYTTLCIFLYIGSYTSELQIRYVFYNLLVAGYKLDKIESDMKNKTSNKKISTGIEDLINMLKECTKVILELENETDTNFNVHTKTSYCSNILEQCLSTLTKSDNLYNIDYNVLENPENKKFIEAYVSKSKSNFAGEEVPKGVDFKLNKSFSNNDCISTDKVDLDKKQIKKFLKQINISQLTKMIQFIDNKLLSDWDFNCLTYFDESEYPFFDINLSLICTIDHNIPINIIINFLCFVEKQYNNVPYHNTIHATMVTQKFFCLAKKLGIYDDLEYKIKLVMFISGICHDIGHPGYNNLFFVNSLHPLSIIYNDISVLENYHASITFKILQLNQCNILKNFSEKDFRMMRSYIIELILSTDMKHHFEIISKFRIRRENEDFDYIKNSDDLLILTKMIIKSADISHGSVSWSEHYCWCQRVLSEFYTQGDEELKNKMPLSPLCDRTKHNEVCKSQITFLKFVVMPLFEELSHIDNNKFIKSFCLKRLNSNCIMWDTLMKEEKTIEVYDPAAVKLKDKKKKKVDKKKKSYIDLTLFFIKNVSD.

Disordered regions lie at residues 1–42 (MGKV…NINK) and 154–177 (GISE…STSN). Over 1-429 (MGKVEDFEEH…LNLNNWISSR (429 aa)) the chain is Cytoplasmic. The segment covering 9–22 (EHNKNSNQDIEKNV) has biased composition (basic and acidic residues). A compositionally biased stretch (polar residues) spans 29-42 (NSNTINDQNENINK). A helical transmembrane segment spans residues 430 to 450 (MIIIGIVMLILSFIIWPLTTW). Residues 451 to 462 (SLKTSTWGRETY) lie on the Extracellular side of the membrane. Residues 463–483 (IIILFHTLMAINTLILIFFII) form a helical membrane-spanning segment. Residues 484-498 (IGSTELCKYSECMSY) are Cytoplasmic-facing. A helical membrane pass occupies residues 499–519 (VLFSLMVALWGLWNIAIGLTL). Residues 520 to 536 (EYNPNLSEMPTTTYELE) lie on the Extracellular side of the membrane. N-linked (GlcNAc...) asparagine glycosylation is present at asparagine 524. The helical transmembrane segment at 537 to 557 (MIYVLTYIYGFLPLVIIDIFF) threads the bilayer. Over 558-564 (PSRTKYN) the chain is Cytoplasmic. The helical transmembrane segment at 565-585 (WIIHLIFIFLNSSSIILVGSA) threads the bilayer. Residues 586–592 (KPDFVPE) are Extracellular-facing. A helical transmembrane segment spans residues 593 to 613 (IYVVFRILAYTTLCIFLYIGS). The Cytoplasmic portion of the chain corresponds to 614–1139 (YTSELQIRYV…TLFFIKNVSD (526 aa)). The PDEase domain maps to 775–1098 (INISQLTKMI…IMWDTLMKEE (324 aa)). Histidine 847 functions as the Proton donor in the catalytic mechanism. A nucleoside 3',5'-cyclic phosphate is bound at residue 847 to 851 (HNTIH). A divalent metal cation-binding residues include histidine 851, histidine 887, aspartate 888, and aspartate 1000. The a nucleoside 3',5'-cyclic phosphate site is built by aspartate 888, aspartate 1000, and glutamine 1052.

The protein belongs to the cyclic nucleotide phosphodiesterase family. A divalent metal cation serves as cofactor.

The protein resides in the cell membrane. The protein localises to the endoplasmic reticulum membrane. The enzyme catalyses 3',5'-cyclic GMP + H2O = GMP + H(+). The catalysed reaction is 3',5'-cyclic AMP + H2O = AMP + H(+). It functions in the pathway purine metabolism; 3',5'-cyclic GMP degradation; GMP from 3',5'-cyclic GMP: step 1/1. Its pathway is purine metabolism; 3',5'-cyclic AMP degradation; AMP from 3',5'-cyclic AMP: step 1/1. In terms of biological role, plays a role in signal transduction by regulating the intracellular concentration of cyclic nucleotides cAMP and cGMP. Catalyzes the hydrolysis of both cAMP and cGMP to 5'-AMP and 5'-GMP, respectively. By regulating cAMP levels during the asexual blood stage and, thus PKA activation, required for merozoite invasion of erythrocytes and for the parasite development immediately following invasion. This Plasmodium falciparum (isolate 3D7) protein is Dual 3',5'-cyclic-AMP and -GMP phosphodiesterase beta.